Here is a 123-residue protein sequence, read N- to C-terminus: Fluoride-specific ion channel FluC (123 aa).

The next 4 helical transmembrane spans lie at Met-1–Ala-21, Leu-32–Phe-52, Phe-66–Phe-86, and Leu-94–Leu-114. Gly-73 and Thr-76 together coordinate Na(+).

It belongs to the fluoride channel Fluc/FEX (TC 1.A.43) family.

The protein resides in the cell inner membrane. It catalyses the reaction fluoride(in) = fluoride(out). Its activity is regulated as follows. Na(+) is not transported, but it plays an essential structural role and its presence is essential for fluoride channel function. Fluoride-specific ion channel. Important for reducing fluoride concentration in the cell, thus reducing its toxicity. The chain is Fluoride-specific ion channel FluC from Psychrobacter arcticus (strain DSM 17307 / VKM B-2377 / 273-4).